Here is a 525-residue protein sequence, read N- to C-terminus: GMP synthase [glutamine-hydrolyzing] (525 aa).

The region spanning 9 to 207 (RILILDFGSQ…VRDICQCEAL (199 aa)) is the Glutamine amidotransferase type-1 domain. Cysteine 86 (nucleophile) is an active-site residue. Catalysis depends on residues histidine 181 and glutamate 183. The GMPS ATP-PPase domain occupies 208 to 400 (WTPAKIIDDA…LGLPYDMLYR (193 aa)). 235-241 (SGGVDSS) lines the ATP pocket.

Homodimer.

It carries out the reaction XMP + L-glutamine + ATP + H2O = GMP + L-glutamate + AMP + diphosphate + 2 H(+). It participates in purine metabolism; GMP biosynthesis; GMP from XMP (L-Gln route): step 1/1. Catalyzes the synthesis of GMP from XMP. This is GMP synthase [glutamine-hydrolyzing] from Escherichia fergusonii (strain ATCC 35469 / DSM 13698 / CCUG 18766 / IAM 14443 / JCM 21226 / LMG 7866 / NBRC 102419 / NCTC 12128 / CDC 0568-73).